We begin with the raw amino-acid sequence, 61 residues long: Photosystem II reaction center protein K (61 aa).

The propeptide occupies 1-24 (MPNILSLTCICFNSVIYPTSFFFA). A helical transmembrane segment spans residues 32–52 (IFNPIVDFMPVIPVLFFLLAF).

This sequence belongs to the PsbK family. In terms of assembly, PSII is composed of 1 copy each of membrane proteins PsbA, PsbB, PsbC, PsbD, PsbE, PsbF, PsbH, PsbI, PsbJ, PsbK, PsbL, PsbM, PsbT, PsbX, PsbY, PsbZ, Psb30/Ycf12, at least 3 peripheral proteins of the oxygen-evolving complex and a large number of cofactors. It forms dimeric complexes.

The protein resides in the plastid. Its subcellular location is the chloroplast thylakoid membrane. Its function is as follows. One of the components of the core complex of photosystem II (PSII). PSII is a light-driven water:plastoquinone oxidoreductase that uses light energy to abstract electrons from H(2)O, generating O(2) and a proton gradient subsequently used for ATP formation. It consists of a core antenna complex that captures photons, and an electron transfer chain that converts photonic excitation into a charge separation. In Oryza nivara (Indian wild rice), this protein is Photosystem II reaction center protein K.